The sequence spans 393 residues: Dual specificity mitogen-activated protein kinase kinase 1 (393 aa).

The tract at residues 1–27 (MPKKKPTPIQLNPAPDGSAVNGTSSAE) is disordered. Residues 68-361 (FEKISELGAG…LKQLMVHAFI (294 aa)) form the Protein kinase domain. Residues 74–82 (LGAGNGGVV) and Lys-97 contribute to the ATP site. Residue Asp-190 is the Proton acceptor of the active site. Ser-218 and Ser-222 each carry phosphoserine; by RAF. Positions 270–307 (ELELMFGCQVEGDAAETPPRPRTPGRPLSSYGMDSRPP) are RAF1-binding. Thr-286 is modified (phosphothreonine). A Phosphothreonine; by MAPK1 modification is found at Thr-292. A Phosphoserine; by PAK modification is found at Ser-298.

It belongs to the protein kinase superfamily. STE Ser/Thr protein kinase family. MAP kinase kinase subfamily. Found in a complex with at least BRAF, HRAS, MAP2K1, MAPK3/ERK1 and RGS14. Forms a heterodimer with MAP2K2/MEK2. Forms heterodimers with KSR2 which further dimerize to form tetramers. Interacts with KSR1 or KSR2 and BRAF; the interaction with KSR1 or KSR2 mediates KSR1-BRAF or KSR2-BRAF dimerization. Interacts with ARBB2, LAMTOR3, MAPK1/ERK2 and RAF1. Interacts with MAPK1/ERK2. Interacts with MORG1. Interacts with PPARG. Interacts with SGK1. Interacts with BIRC6/bruce. Interacts with KAT7; the interaction promotes KAT7 phosphorylation. Interacts with RAF1 and NEK10; the interaction is required for ERK1/2-signaling pathway activation in response to UV irradiation. Interacts with TRAF3IP3. Interacts with MOS. Post-translationally, phosphorylation at Ser-218 and Ser-222 by MAP kinase kinase kinases (RAF or MEKK1) positively regulates the kinase activity. Also phosphorylated at Thr-292 by MAPK1/ERK2 and at Ser-298 by PAK. MAPK1/ERK2 phosphorylation of Thr-292 occurs in response to cellular adhesion and leads to inhibition of Ser-298 phosphorylation by PAK. Autophosphorylated at Ser-218 and Ser-222, autophosphosphorylation is promoted by NEK10 following UV irradiation.

Its subcellular location is the cytoplasm. It is found in the cytoskeleton. It localises to the microtubule organizing center. The protein localises to the centrosome. The protein resides in the spindle pole body. Its subcellular location is the nucleus. It is found in the membrane. The enzyme catalyses L-seryl-[protein] + ATP = O-phospho-L-seryl-[protein] + ADP + H(+). It catalyses the reaction L-threonyl-[protein] + ATP = O-phospho-L-threonyl-[protein] + ADP + H(+). The catalysed reaction is L-tyrosyl-[protein] + ATP = O-phospho-L-tyrosyl-[protein] + ADP + H(+). Ras proteins such as HRAS mediate the activation of RAF proteins such as RAF1 or BRAF which in turn activate extracellular signal-regulated kinases (ERK) through MAPK (mitogen-activated protein kinases) and ERK kinases MAP2K1/MEK1 and MAP2K2/MEK2. Activation occurs through phosphorylation of Ser-218 and Ser-222. MAP2K1/MEK1 binds KSR1 or KSR2 releasing the inhibitory intramolecular interaction between KSR1 or KSR2 protein kinase and N-terminal domains. This allows KSR1 or KSR2 dimerization with BRAF leading to BRAF activation and phosphorylation of MAP2K1. MAP2K1/MEK1 is also the target of negative feed-back regulation by its substrate kinases, such as MAPK1/ERK2. These phosphorylate MAP2K1/MEK1 on Thr-292, thereby facilitating dephosphorylation of the activating residues Ser-218 and Ser-222. Inhibited by serine/threonine phosphatase 2A. Its function is as follows. Dual specificity protein kinase which acts as an essential component of the MAP kinase signal transduction pathway. Binding of extracellular ligands such as growth factors, cytokines and hormones to their cell-surface receptors activates RAS and this initiates RAF1 activation. RAF1 then further activates the dual-specificity protein kinases MAP2K1/MEK1 and MAP2K2/MEK2. Both MAP2K1/MEK1 and MAP2K2/MEK2 function specifically in the MAPK/ERK cascade, and catalyze the concomitant phosphorylation of a threonine and a tyrosine residue in a Thr-Glu-Tyr sequence located in the extracellular signal-regulated kinases MAPK3/ERK1 and MAPK1/ERK2, leading to their activation and further transduction of the signal within the MAPK/ERK cascade. Activates BRAF in a KSR1 or KSR2-dependent manner; by binding to KSR1 or KSR2 releases the inhibitory intramolecular interaction between KSR1 or KSR2 protein kinase and N-terminal domains which promotes KSR1 or KSR2-BRAF dimerization and BRAF activation. Depending on the cellular context, this pathway mediates diverse biological functions such as cell growth, adhesion, survival and differentiation, predominantly through the regulation of transcription, metabolism and cytoskeletal rearrangements. One target of the MAPK/ERK cascade is peroxisome proliferator-activated receptor gamma (PPARG), a nuclear receptor that promotes differentiation and apoptosis. MAP2K1/MEK1 has been shown to export PPARG from the nucleus. The MAPK/ERK cascade is also involved in the regulation of endosomal dynamics, including lysosome processing and endosome cycling through the perinuclear recycling compartment (PNRC), as well as in the fragmentation of the Golgi apparatus during mitosis. This is Dual specificity mitogen-activated protein kinase kinase 1 (MAP2K1) from Oryctolagus cuniculus (Rabbit).